Here is a 254-residue protein sequence, read N- to C-terminus: E3 ubiquitin-protein ligase NEURL3 (254 aa).

The region spanning 17–174 is the NHR domain; the sequence is ALSFHGNATG…TTKAIELLDP (158 aa). The segment at 197-236 adopts an RING-type zinc-finger fold; that stretch reads CVICFHNTANTRLMPCGHSHFCGSCAWHIFKDTARCPICR.

In terms of tissue distribution, expressed in alveolar epithelial type II cells.

The protein localises to the cytoplasm. The catalysed reaction is S-ubiquitinyl-[E2 ubiquitin-conjugating enzyme]-L-cysteine + [acceptor protein]-L-lysine = [E2 ubiquitin-conjugating enzyme]-L-cysteine + N(6)-ubiquitinyl-[acceptor protein]-L-lysine.. It participates in protein modification; protein ubiquitination. Its function is as follows. E3 ubiquitin-protein ligase that plays a role in various biological processes such as lung development or innate immunity. Seems to utilize UBE2E1. Promotes innate antiviral response by catalyzing 'Lys-63'-linked ubiquitination of IRF7. Plays an essential role in TLR4-mediated activation of MAPK pathways by promoting 'Lys-48'-linked polyubiquitination of the phosphatase DUSP1/MKP1. This is E3 ubiquitin-protein ligase NEURL3 (Neurl3) from Mus musculus (Mouse).